Reading from the N-terminus, the 193-residue chain is MIGRIAGVLLEKNPPHLLVDCNGVGYEVDVPMSTFYNLPSTGERVVLLTQMIVREDAHLLYGFGTAEERSTFRELLKISGIGARMALAVLSGMSVHELAQTVTMQDAARLTRVPGIGKKTAERLLLELKGKIGADLGAMAGAASASDHASDILNALLALGYSEKEALAAVKNVPAGTGVSEGIKLALKALSKG.

Residues 1 to 64 (MIGRIAGVLL…EDAHLLYGFG (64 aa)) are domain I. The segment at 65–139 (TAEERSTFRE…GKIGADLGAM (75 aa)) is domain II. Residues 139–143 (MAGAA) are flexible linker. Residues 144–193 (SASDHASDILNALLALGYSEKEALAAVKNVPAGTGVSEGIKLALKALSKG) form a domain III region.

This sequence belongs to the RuvA family. In terms of assembly, homotetramer. Forms an RuvA(8)-RuvB(12)-Holliday junction (HJ) complex. HJ DNA is sandwiched between 2 RuvA tetramers; dsDNA enters through RuvA and exits via RuvB. An RuvB hexamer assembles on each DNA strand where it exits the tetramer. Each RuvB hexamer is contacted by two RuvA subunits (via domain III) on 2 adjacent RuvB subunits; this complex drives branch migration. In the full resolvosome a probable DNA-RuvA(4)-RuvB(12)-RuvC(2) complex forms which resolves the HJ.

The protein resides in the cytoplasm. Its function is as follows. The RuvA-RuvB-RuvC complex processes Holliday junction (HJ) DNA during genetic recombination and DNA repair, while the RuvA-RuvB complex plays an important role in the rescue of blocked DNA replication forks via replication fork reversal (RFR). RuvA specifically binds to HJ cruciform DNA, conferring on it an open structure. The RuvB hexamer acts as an ATP-dependent pump, pulling dsDNA into and through the RuvAB complex. HJ branch migration allows RuvC to scan DNA until it finds its consensus sequence, where it cleaves and resolves the cruciform DNA. The protein is Holliday junction branch migration complex subunit RuvA of Paraburkholderia xenovorans (strain LB400).